The chain runs to 202 residues: NADH-quinone oxidoreductase subunit C (202 aa).

This sequence belongs to the complex I 30 kDa subunit family. As to quaternary structure, NDH-1 is composed of 14 different subunits. Subunits NuoB, C, D, E, F, and G constitute the peripheral sector of the complex.

Its subcellular location is the cell inner membrane. The catalysed reaction is a quinone + NADH + 5 H(+)(in) = a quinol + NAD(+) + 4 H(+)(out). Its function is as follows. NDH-1 shuttles electrons from NADH, via FMN and iron-sulfur (Fe-S) centers, to quinones in the respiratory chain. The immediate electron acceptor for the enzyme in this species is believed to be ubiquinone. Couples the redox reaction to proton translocation (for every two electrons transferred, four hydrogen ions are translocated across the cytoplasmic membrane), and thus conserves the redox energy in a proton gradient. The polypeptide is NADH-quinone oxidoreductase subunit C (Albidiferax ferrireducens (strain ATCC BAA-621 / DSM 15236 / T118) (Rhodoferax ferrireducens)).